A 159-amino-acid chain; its full sequence is NADH-quinone oxidoreductase subunit I (159 aa).

4Fe-4S ferredoxin-type domains lie at 51 to 80 (RRYE…IEAD) and 90 to 119 (TRYD…EGPN). Residues Cys60, Cys63, Cys66, Cys70, Cys99, Cys102, Cys105, and Cys109 each contribute to the [4Fe-4S] cluster site.

The protein belongs to the complex I 23 kDa subunit family. As to quaternary structure, NDH-1 is composed of 14 different subunits. Subunits NuoA, H, J, K, L, M, N constitute the membrane sector of the complex. [4Fe-4S] cluster is required as a cofactor.

It is found in the cell inner membrane. It carries out the reaction a quinone + NADH + 5 H(+)(in) = a quinol + NAD(+) + 4 H(+)(out). NDH-1 shuttles electrons from NADH, via FMN and iron-sulfur (Fe-S) centers, to quinones in the respiratory chain. The immediate electron acceptor for the enzyme in this species is believed to be ubiquinone. Couples the redox reaction to proton translocation (for every two electrons transferred, four hydrogen ions are translocated across the cytoplasmic membrane), and thus conserves the redox energy in a proton gradient. This Rickettsia rickettsii (strain Sheila Smith) protein is NADH-quinone oxidoreductase subunit I.